We begin with the raw amino-acid sequence, 180 residues long: Fucolectin-3 (180 aa).

Positions 1–22 (MEVKMIILLFQILAISTLKSDS) are cleaved as a signal peptide. The tract at residues 31–179 (QENVALRGRA…VEVNVLFPAP (149 aa)) is F5/8 type C-like. The Ca(2+) site is built by N58, D61, N63, and S72. 3 disulfide bridges follow: C73/C168, C104/C105, and C130/C146. The alpha-L-fucose site is built by H75 and R101. The Cell attachment site motif lies at 101–103 (RGD). R108 lines the alpha-L-fucose pocket. 2 residues coordinate Ca(2+): C168 and E169.

This sequence belongs to the fucolectin family. Homotrimer. Parenchymal hepatocytes.

The protein resides in the secreted. The protein localises to the extracellular space. Its function is as follows. Acts as a defensive agent. Recognizes blood group fucosylated oligosaccharides including A, B, H and Lewis B-type antigens. Does not recognize Lewis A antigen and has low affinity for monovalent haptens. This is Fucolectin-3 from Anguilla japonica (Japanese eel).